The chain runs to 333 residues: DNA repair and recombination protein RadA (333 aa).

Residue 127-134 (GEFGSGKT) participates in ATP binding.

This sequence belongs to the eukaryotic RecA-like protein family.

In terms of biological role, involved in DNA repair and in homologous recombination. Binds and assemble on single-stranded DNA to form a nucleoprotein filament. Hydrolyzes ATP in a ssDNA-dependent manner and promotes DNA strand exchange between homologous DNA molecules. The sequence is that of DNA repair and recombination protein RadA from Pyrobaculum arsenaticum (strain DSM 13514 / JCM 11321 / PZ6).